The following is a 201-amino-acid chain: Probable molybdenum cofactor guanylyltransferase (201 aa).

GTP contacts are provided by residues 6–8 (LAG), Lys-18, Asp-67, and Asp-92. Position 92 (Asp-92) interacts with Mg(2+).

Belongs to the MobA family. Mg(2+) serves as cofactor.

It localises to the cytoplasm. It carries out the reaction Mo-molybdopterin + GTP + H(+) = Mo-molybdopterin guanine dinucleotide + diphosphate. In terms of biological role, transfers a GMP moiety from GTP to Mo-molybdopterin (Mo-MPT) cofactor (Moco or molybdenum cofactor) to form Mo-molybdopterin guanine dinucleotide (Mo-MGD) cofactor. The polypeptide is Probable molybdenum cofactor guanylyltransferase (Thermococcus kodakarensis (strain ATCC BAA-918 / JCM 12380 / KOD1) (Pyrococcus kodakaraensis (strain KOD1))).